A 46-amino-acid polypeptide reads, in one-letter code: Mu-segestritoxin-Sf1g (46 aa).

4 disulfide bridges follow: Cys-3–Cys-19, Cys-10–Cys-22, Cys-18–Cys-42, and Cys-24–Cys-40. The interval 31–33 is keys region for toxin activity; sequence RPW.

It belongs to the neurotoxin 16 (SFI) family. As to expression, expressed by the venom gland.

The protein resides in the secreted. Insecticidal toxin. It inhibits insect voltage-gated sodium channels (Nav) by partially blocking the channel pore in DUM neurons from the American cockroach, not by acting as a gating modifier. The inhibition is only partially reversible after prolonged washout. In vivo, the toxin causes flaccid paralysis followed by death when injected into Heliothis virescens larvae. It also causes uncoordinated movements followed by full paralysis to sheep blowflies (Lucilia cuprina). When the toxin is fused to snowdrop lectin, it is orally active against larvae of the tomato moth (Laconobia oleracea), the rice brown planthopper (Nilaparvata lugens), and the peach-potato aphid (Myzus persicae). This chain is Mu-segestritoxin-Sf1g, found in Segestria florentina (Tube-web spider).